Reading from the N-terminus, the 593-residue chain is Solute carrier family 13 member 2 (593 aa).

4 helical membrane passes run 11 to 31, 53 to 73, 86 to 106, and 121 to 141; these read YRMY…PILV, ALPL…MGIM, TNVL…WNLH, and PALL…WISN. Polar residues predominate over residues 164 to 184; it reads SNVEEGSDNPTFELQEPSPQK. The segment at 164–204 is disordered; that stretch reads SNVEEGSDNPTFELQEPSPQKETSKVDEKDNGQAQPLPAVP. Positions 185–194 are enriched in basic and acidic residues; the sequence is ETSKVDEKDN. Transmembrane regions (helical) follow at residues 221-241, 270-290, 327-347, 369-389, 451-471, 485-505, 514-534, and 543-563; these read GMSL…LTGT, FAFP…QILF, PMSF…LLWF, VMVS…MVPS, LMPL…LLVA, LLLP…LYVM, LAFM…FGGL, and GIML…SWGV.

This sequence belongs to the SLC13A/DASS transporter (TC 2.A.47) family. NADC subfamily. As to expression, abundant in kidney and small intestine.

The protein localises to the apical cell membrane. The catalysed reaction is succinate(out) + 3 Na(+)(out) = succinate(in) + 3 Na(+)(in). It catalyses the reaction fumarate(out) + 3 Na(+)(out) = fumarate(in) + 3 Na(+)(in). The enzyme catalyses 2-oxoglutarate(out) + 3 Na(+)(out) = 2-oxoglutarate(in) + 3 Na(+)(in). Li(+) decreases succinate transport in the presence of Na(+), by competing at one of the three cation binding sites. Functionally, low-affinity sodium-dicarboxylate cotransporter, that mediates the entry of citric acid cycle intermediates, such as succinate, citrate, fumarate and alpha-ketoglutarate (2-oxoglutarate) into the small intestine and renal proximal tubule. Transports the dicarboxylate into the cell with a probable stoichiometry of 3 Na(+) for 1 divalent dicarboxylate, rendering the process electrogenic. Citrate is transported in protonated form as a divalent anion, rather than the trivalent form which is normally found in blood. Has a critical role in renal dicarboxylate transport. The chain is Solute carrier family 13 member 2 (SLC13A2) from Oryctolagus cuniculus (Rabbit).